The sequence spans 235 residues: Phosphoribosylaminoimidazole-succinocarboxamide synthase (235 aa).

Belongs to the SAICAR synthetase family.

It catalyses the reaction 5-amino-1-(5-phospho-D-ribosyl)imidazole-4-carboxylate + L-aspartate + ATP = (2S)-2-[5-amino-1-(5-phospho-beta-D-ribosyl)imidazole-4-carboxamido]succinate + ADP + phosphate + 2 H(+). Its pathway is purine metabolism; IMP biosynthesis via de novo pathway; 5-amino-1-(5-phospho-D-ribosyl)imidazole-4-carboxamide from 5-amino-1-(5-phospho-D-ribosyl)imidazole-4-carboxylate: step 1/2. The chain is Phosphoribosylaminoimidazole-succinocarboxamide synthase from Lachnoclostridium phytofermentans (strain ATCC 700394 / DSM 18823 / ISDg) (Clostridium phytofermentans).